Reading from the N-terminus, the 92-residue chain is Large ribosomal subunit protein bL31 (92 aa).

It belongs to the bacterial ribosomal protein bL31 family. Type A subfamily. Part of the 50S ribosomal subunit.

Its function is as follows. Binds the 23S rRNA. This chain is Large ribosomal subunit protein bL31, found in Mesoplasma florum (strain ATCC 33453 / NBRC 100688 / NCTC 11704 / L1) (Acholeplasma florum).